The primary structure comprises 229 residues: Uracil-DNA glycosylase (229 aa).

Catalysis depends on Asp-67, which acts as the Proton acceptor.

This sequence belongs to the uracil-DNA glycosylase (UDG) superfamily. UNG family.

Its subcellular location is the cytoplasm. It carries out the reaction Hydrolyzes single-stranded DNA or mismatched double-stranded DNA and polynucleotides, releasing free uracil.. In terms of biological role, excises uracil residues from the DNA which can arise as a result of misincorporation of dUMP residues by DNA polymerase or due to deamination of cytosine. This is Uracil-DNA glycosylase from Coxiella burnetii (strain CbuK_Q154) (Coxiella burnetii (strain Q154)).